The following is a 491-amino-acid chain: Nicotinamide phosphoribosyltransferase (491 aa).

Position 1 is an N-acetylmethionine (Met1). At Tyr188 the chain carries Phosphotyrosine. A diphosphate-binding site is contributed by Arg196. Residue Asp219 coordinates beta-nicotinamide D-ribonucleotide. Residues His247 and Arg311 each coordinate diphosphate. Residues Arg311–Asp313, Gly353–Asp354, Gly384, and Arg392 each bind beta-nicotinamide D-ribonucleotide. Position 472 is a phosphoserine (Ser472).

The protein belongs to the NAPRTase family. Homodimer. As to expression, ubiquitously expressed in lymphoid and non-lymphoid tissues.

The protein localises to the nucleus. It localises to the cytoplasm. The protein resides in the secreted. The enzyme catalyses beta-nicotinamide D-ribonucleotide + diphosphate = 5-phospho-alpha-D-ribose 1-diphosphate + nicotinamide + H(+). The protein operates within cofactor biosynthesis; NAD(+) biosynthesis; nicotinamide D-ribonucleotide from 5-phospho-alpha-D-ribose 1-diphosphate and nicotinamide: step 1/1. In terms of biological role, the secreted form behaves both as a cytokine with immunomodulating properties and an adipokine with anti-diabetic properties, it has no enzymatic activity, partly because of lack of activation by ATP, which has a low level in extracellular space and plasma. Catalyzes the condensation of nicotinamide with 5-phosphoribosyl-1-pyrophosphate to yield nicotinamide mononucleotide, an intermediate in the biosynthesis of NAD. It is the rate limiting component in the mammalian NAD biosynthesis pathway. Plays a role in the modulation of circadian clock function. NAMPT-dependent oscillatory production of NAD regulates oscillation of clock target gene expression by releasing the core clock component: CLOCK-BMAL1 heterodimer from NAD-dependent SIRT1-mediated suppression. This Mus musculus (Mouse) protein is Nicotinamide phosphoribosyltransferase (Nampt).